The primary structure comprises 385 residues: Basigin (385 aa).

An N-terminal signal peptide occupies residues 1–21 (MAAALFVLLGFALLGTHGASG). The 84-residue stretch at 37–120 (GGSVELHCEA…SNDPDRNHLT (84 aa)) folds into the Ig-like domain. Disulfide bonds link cysteine 44/cysteine 108, cysteine 157/cysteine 203, and cysteine 242/cysteine 301. One can recognise an Ig-like C2-type domain in the interval 138-219 (EPGTVFTTVE…MGTANIQLHG (82 aa)). Topologically, residues 138–323 (EPGTVFTTVE…ITLRVRSHLA (186 aa)) are extracellular. N-linked (GlcNAc...) asparagine glycosylation occurs at asparagine 160. The essential for interaction with KDR/VEGFR2 stretch occupies residues 195-199 (DDQWG). In terms of domain architecture, Ig-like V-type spans 221–315 (PRVKAVKSSE…SKGSDQAIIT (95 aa)). N-linked (GlcNAc...) asparagine glycosylation is found at asparagine 268 and asparagine 302. The chain crosses the membrane as a helical span at residues 324–344 (ALWPFLGIVAEVLVLVTIIFI). Residues 345-385 (YEKRRKPEDVLDDDDAGSAPLKSSGQHQNDKGKNVRQRNSS) are Cytoplasmic-facing. Residues 353 to 385 (DVLDDDDAGSAPLKSSGQHQNDKGKNVRQRNSS) are disordered. Phosphoserine occurs at positions 362 and 368.

As to quaternary structure, homooligomer. Interacts with NXNL1. Interacts with SLC2A1 and SLC16A1/GLUT1. Interacts with XKR8; promoting its localization at the cell membrane. In terms of assembly, (Microbial infection) Interacts with P.falciparum (isolate 3D7) RH5/PfRH5; the interaction is required for the invasion of the host erythrocytes by the parasite at the merozoite stage. Homooligomer. Forms heterooligomers with isoform 3. Interacts with VEGFA and KDR/VEGFR2. Interacts with PPIA/CYPA. Interacts with PPIL2; regulates BSG transport to the cell membrane. Interacts with SLC16A1; interaction mediates SLC16A3 targeting to the plasma membrane. Interacts with SLC16A12. Interacts with SLC16A11. Interacts with AJAP1. Interacts with SLC1A3, ATP1B2, MAG and L1CAM. Interacts with SLC16A3; interaction mediates SLC16A3 targeting to the plasma membrane. As to quaternary structure, (Microbial infection) Interacts with P.falciparum (isolates 3D7 or 7G8) RH5/PfRH5; the interaction is required for the invasion of the host erythrocytes by the parasite at the merozoite stage. In terms of assembly, (Microbial infection) Does not interact with severe acute respiratory syndrome coronavirus 2 (SARS-CoV-2) spike glycoprotein, even if previous works were based on a putative interaction. Forms heterooligomers with isoform 2. As to quaternary structure, interacts with SLC16A6; this interaction mediates targeting to the plasma membrane. In terms of processing, N-glycosylated. In terms of tissue distribution, retina-specific. Expressed in retinal cone photoreceptors (at protein level). As to expression, expressed in erythrocytes (at protein level). Highly expressed in melanoma cell lines (at protein level). Highly expressed in the heart, kidney, skeletal muscle and testis. Highly expressed in the bone marrow, fetal liver, lung, testis and thymus.

It is found in the melanosome. It localises to the cell membrane. Its subcellular location is the photoreceptor inner segment. The protein resides in the cell projection. The protein localises to the cilium. It is found in the photoreceptor outer segment. It localises to the endosome. Its subcellular location is the endoplasmic reticulum membrane. The protein resides in the basolateral cell membrane. In terms of biological role, essential for normal retinal maturation and development. Acts as a retinal cell surface receptor for NXNL1 and plays an important role in NXNL1-mediated survival of retinal cone photoreceptors. In association with glucose transporter SLC16A1/GLUT1 and NXNL1, promotes retinal cone survival by enhancing aerobic glycolysis and accelerating the entry of glucose into photoreceptors. May act as a potent stimulator of IL6 secretion in multiple cell lines that include monocytes. Functionally, (Microbial infection) Erythrocyte receptor for P.falciparum RH5 which is essential for erythrocyte invasion by the merozoite stage of P.falciparum isolates 3D7 and Dd2. Signaling receptor for cyclophilins, essential for PPIA/CYPA and PPIB/CYPB-dependent signaling related to chemotaxis and adhesion of immune cells. Plays an important role in targeting monocarboxylate transporters SLC16A1/GLUT1, SLC16A11 and SLC16A12 to the plasma membrane. Acts as a coreceptor for vascular endothelial growth factor receptor 2 (KDR/VEGFR2) in endothelial cells enhancing its VEGFA-mediated activation and downstream signaling. Promotes angiogenesis through EPAS1/HIF2A-mediated up-regulation of VEGFA (isoform VEGF-165 and VEGF-121) and KDR/VEGFR2 in endothelial cells. Plays a key role in regulating tumor growth, invasion, metastasis and neoangiogenesis by stimulating the production and release of extracellular matrix metalloproteinases and KDR/VEGFR2 by both tumor cells and stromal cells (fibroblasts and endothelial cells). Its function is as follows. (Microbial infection) Erythrocyte receptor for P.falciparum RH5 which is essential for erythrocyte invasion by the merozoite stage of P.falciparum isolates 3D7, Dd2, 7G8 and HB3. Binding of P.falciparum RH5 results in BSG dimerization which triggers an increase in intracellular Ca(2+) in the erythrocyte. This essential step leads to a rearrangement of the erythrocyte cytoskeleton required for the merozoite invasion. In terms of biological role, (Microbial infection) Can facilitate human SARS coronavirus (SARS-CoV-1) infection via its interaction with virus-associated PPIA/CYPA. Functionally, (Microbial infection) Can facilitate HIV-1 infection via its interaction with virus-associated PPIA/CYPA. (Microbial infection) First described as a receptor for severe acute respiratory syndrome coronavirus 2 (SARS-CoV-2), it is not required for SARS-CoV-2 infection. Its function is as follows. (Microbial infection) Acts as a receptor for measles virus. In terms of biological role, (Microbial infection) Promotes entry of pentamer-expressing human cytomegalovirus (HCMV) into epithelial and endothelial cells. This Homo sapiens (Human) protein is Basigin.